We begin with the raw amino-acid sequence, 428 residues long: Serine--tRNA ligase (428 aa).

234 to 236 (TAE) lines the L-serine pocket. Residue 265–267 (RRE) coordinates ATP. Glutamate 288 contributes to the L-serine binding site. ATP is bound at residue 352 to 355 (EISS). Serine 388 is a binding site for L-serine.

This sequence belongs to the class-II aminoacyl-tRNA synthetase family. Type-1 seryl-tRNA synthetase subfamily. As to quaternary structure, homodimer. The tRNA molecule binds across the dimer.

It localises to the cytoplasm. The enzyme catalyses tRNA(Ser) + L-serine + ATP = L-seryl-tRNA(Ser) + AMP + diphosphate + H(+). It carries out the reaction tRNA(Sec) + L-serine + ATP = L-seryl-tRNA(Sec) + AMP + diphosphate + H(+). Its pathway is aminoacyl-tRNA biosynthesis; selenocysteinyl-tRNA(Sec) biosynthesis; L-seryl-tRNA(Sec) from L-serine and tRNA(Sec): step 1/1. Functionally, catalyzes the attachment of serine to tRNA(Ser). Is also able to aminoacylate tRNA(Sec) with serine, to form the misacylated tRNA L-seryl-tRNA(Sec), which will be further converted into selenocysteinyl-tRNA(Sec). The polypeptide is Serine--tRNA ligase (Synechococcus elongatus (strain ATCC 33912 / PCC 7942 / FACHB-805) (Anacystis nidulans R2)).